The chain runs to 376 residues: Erythronate-4-phosphate dehydrogenase (376 aa).

The substrate site is built by Ser45 and Thr67. Asp147 is a binding site for NAD(+). Arg209 is a catalytic residue. Asp233 is an NAD(+) binding site. Glu238 is a catalytic residue. His255 (proton donor) is an active-site residue. Residue Gly258 coordinates NAD(+). A substrate-binding site is contributed by Tyr259.

This sequence belongs to the D-isomer specific 2-hydroxyacid dehydrogenase family. PdxB subfamily. As to quaternary structure, homodimer.

It is found in the cytoplasm. The catalysed reaction is 4-phospho-D-erythronate + NAD(+) = (R)-3-hydroxy-2-oxo-4-phosphooxybutanoate + NADH + H(+). It participates in cofactor biosynthesis; pyridoxine 5'-phosphate biosynthesis; pyridoxine 5'-phosphate from D-erythrose 4-phosphate: step 2/5. Its function is as follows. Catalyzes the oxidation of erythronate-4-phosphate to 3-hydroxy-2-oxo-4-phosphonooxybutanoate. The protein is Erythronate-4-phosphate dehydrogenase of Shewanella baltica (strain OS195).